The sequence spans 738 residues: Platelet endothelial cell adhesion molecule (738 aa).

The first 27 residues, 1-27 (MQPRWAQGATMWLGVLLTLLLCSSLEG), serve as a signal peptide directing secretion. At 28–601 (QENSFTINSV…VRVILAPWKK (574 aa)) the chain is on the extracellular side. 3 consecutive Ig-like C2-type domains span residues 35-121 (NSVD…KTTA), 145-233 (GGIV…TESF), and 236-315 (PKFH…SKVS). N-linked (GlcNAc...) asparagine glycosylation is found at Asn52, Asn84, and Asn151. Residues Cys57 and Cys109 are joined by a disulfide bond. 2 cysteine pairs are disulfide-bonded: Cys152–Cys206 and Cys256–Cys304. N-linked (GlcNAc...) asparagine glycans are attached at residues Asn301, Asn320, Asn344, Asn356, Asn453, and Asn551. Ig-like C2-type domains are found at residues 328-401 (PELE…NTVQ), 424-493 (GQTI…EVLR), and 499-591 (PVDE…KILT). 3 disulfides stabilise this stretch: Cys347–Cys386, Cys431–Cys476, and Cys523–Cys572. The chain crosses the membrane as a helical span at residues 602–620 (GLIAVVIIGVIIALLIIAA). Topologically, residues 621–738 (KCYFLRKAKA…SRTEGSLDGT (118 aa)) are cytoplasmic. Cys622 carries the S-palmitoyl cysteine lipid modification. The disordered stretch occupies residues 658 to 715 (EANSHYGHNDDVRNHAMKPINDNKEPLNSDVQYTEVQVSSAESHKDLGKKDTETVYSE). A compositionally biased stretch (polar residues) spans 686 to 698 (SDVQYTEVQVSSA). 2 consecutive short sequence motifs (ITIM motif) follow at residues 688–693 (VQYTEV) and 711–716 (TVYSEV). Phosphotyrosine; by FER occurs at positions 690 and 713. The segment covering 699-715 (ESHKDLGKKDTETVYSE) has biased composition (basic and acidic residues). The membrane-bound segment which detaches upon phosphorylation stretch occupies residues 709–729 (TETVYSEVRKAVPDAVESRYS). The tract at residues 721-738 (PDAVESRYSRTEGSLDGT) is may play a role in cytoprotective signaling. Residues Ser729 and Ser734 each carry the phosphoserine modification.

As to quaternary structure, trans-homodimer (via Ig-like C2-type 1 and Ig-like C2-type 2 domains); trans-homodimerization is required for cell-cell interaction. Forms a complex with BDKRB2 and GNAQ. Interacts with BDKRB2 and GNAQ. Interacts with PTPN11; Tyr-713 is critical for PTPN11 recruitment. Interacts with FER. Interacts (via Ig-like C2-type domain 6) with CD177; the interaction is Ca(2+)-dependent; the interaction is direct. Phosphorylated on Ser and Tyr residues after cellular activation by src kinases. Upon activation, phosphorylated on Ser-729 which probably initiates the dissociation of the membrane-interaction segment (residues 709-729) from the cell membrane allowing the sequential phosphorylation of Tyr-713 and Tyr-690. Constitutively phosphorylated on Ser-734 in resting platelets. Phosphorylated on tyrosine residues by FER and FES in response to FCER1 activation. In endothelial cells Fyn mediates mechanical-force (stretch or pull) induced tyrosine phosphorylation. In terms of processing, palmitoylation by ZDHHC21 is necessary for cell surface expression in endothelial cells and enrichment in membrane rafts. Expressed on platelets and leukocytes and is primarily concentrated at the borders between endothelial cells. Expressed in human umbilical vein endothelial cells (HUVECs) (at protein level). Expressed on neutrophils (at protein level). Isoform Long predominates in all tissues examined. Isoform Delta12 is detected only in trachea. Isoform Delta14-15 is only detected in lung. Isoform Delta14 is detected in all tissues examined with the strongest expression in heart. Isoform Delta15 is expressed in brain, testis, ovary, cell surface of platelets, human umbilical vein endothelial cells (HUVECs), Jurkat T-cell leukemia, human erythroleukemia (HEL) and U-937 histiocytic lymphoma cell lines (at protein level).

Its subcellular location is the cell membrane. The protein localises to the membrane raft. It is found in the cell junction. Functionally, cell adhesion molecule which is required for leukocyte transendothelial migration (TEM) under most inflammatory conditions. Tyr-690 plays a critical role in TEM and is required for efficient trafficking of PECAM1 to and from the lateral border recycling compartment (LBRC) and is also essential for the LBRC membrane to be targeted around migrating leukocytes. Trans-homophilic interaction may play a role in endothelial cell-cell adhesion via cell junctions. Heterophilic interaction with CD177 plays a role in transendothelial migration of neutrophils. Homophilic ligation of PECAM1 prevents macrophage-mediated phagocytosis of neighboring viable leukocytes by transmitting a detachment signal. Promotes macrophage-mediated phagocytosis of apoptotic leukocytes by tethering them to the phagocytic cells; PECAM1-mediated detachment signal appears to be disabled in apoptotic leukocytes. Modulates bradykinin receptor BDKRB2 activation. Regulates bradykinin- and hyperosmotic shock-induced ERK1/2 activation in endothelial cells. Induces susceptibility to atherosclerosis. Does not protect against apoptosis. This Homo sapiens (Human) protein is Platelet endothelial cell adhesion molecule (PECAM1).